Reading from the N-terminus, the 1082-residue chain is MAFQLDNGYYSHQALAMMRKKKTEPRNAGESSGTQQATGAPGRGPSQRPERAQQHGGGGWQPANPQYAQQAGRGGGQHQGRGGRYQGRGGPTSHQPGGGPVEYQAHEYYGRGVQRQGGMPQHRSGSGGHGVPASPSRTVPELHQASQDQYQATVVAPSPSRTGPSSLPVEASSEEVQHQFQELAIQGQSPTSQAIQPAPPSSKSVRFPMRPGKGTFGDRCIVKANHFFAELPDKDLHQYDVSITPEVPSRGVNRAVIGEIVTQYRQSHLGGRLPVYDGRKSLYTAGPLPFTSRTFDVILQDEEESLAVGQGAQRRERPFKVVIKFAARADLHHLAMFLAGRQADAPQEALQVLDIVLRELPTARYSPVARSFYSPNLGRRQQLGEGLESWRGFYQSIRPTQMGLSLNIDMSSTAFIEPLPVIDFVAQLLNRDISVRPLSDADRVKIKKALRGVKVEVTHRGNMRRKYRISGLTSQATRELSFPIDNHGTVKTVVQYFQETYGFNIKHTTLPCLQVGNQQRPNYLPMEVCKIVEGQRYSKRLNEKQITALLKVTCQRPQERELDILQTVHHNAYHQDPYAQEFGIRIDERLASVEARVLPPPWLKYHDSGREKDVLPRIGQWNMMNKKMVNGGRVNNWTCINFSRHVQDNAARSFCRELAIMCQISGMDFSIDPVVPLVTARPEHVERALKARYQEAMNILKPQGGELDLLIAILPDNNGSLYGDLKRICETDLGLVSQCCLTKHVFKMSKQYLANVALKINVKVGGRNTVLVDALTRRIPLVSDRPTIIFGADVTHPHPGEDSSPSIAAVVASQDWPEVTKYAGLVSAQAHRQELIQDLFKVWKDPQRGTVSGGMIRELLISFKRATGQKPQRIIFYRDGVSEGQFYQVLFYELDAIRKACASLEADYQPPVTFVVVQKRHHTRLFANNHKDQRTVDRSGNILPGTVVDSKICHPTEFDFYLCSHAGIQGTSRPAHYHVLWDENKFTADGLQTLTNNLCYTYARCTRSVSIVPPAYYAHLAAFRARFYMEPDTSDSGSMASGAHTRGGGPLPGARSTKPAGNVAVRPLPDLKENVKRVMFYC.

Disordered stretches follow at residues 17 to 148 (MMRK…ASQD) and 187 to 208 (GQSP…VRFP). Polar residues predominate over residues 29–38 (GESSGTQQAT). Over residues 72–100 (GRGGGQHQGRGGRYQGRGGPTSHQPGGGP) the composition is skewed to gly residues. Residues 420–533 (PVIDFVAQLL…LPMEVCKIVE (114 aa)) form the PAZ domain. In terms of domain architecture, Piwi spans 709-1030 (LLIAILPDNN…AAFRARFYME (322 aa)). Residues 1036–1065 (SGSMASGAHTRGGGPLPGARSTKPAGNVAV) form a disordered region.

This sequence belongs to the argonaute family. Ago subfamily.

Functionally, probably involved in the RNA silencing pathway. May bind to short RNAs such as microRNAs (miRNAs) or short interfering RNAs (siRNAs), and represses the translation of mRNAs which are complementary to them. This chain is Protein argonaute 1A (AGO1A), found in Oryza sativa subsp. japonica (Rice).